The following is a 335-amino-acid chain: N-acetyl-gamma-glutamyl-phosphate reductase (335 aa).

C156 is a catalytic residue.

This sequence belongs to the NAGSA dehydrogenase family. Type 1 subfamily.

It is found in the cytoplasm. It carries out the reaction N-acetyl-L-glutamate 5-semialdehyde + phosphate + NADP(+) = N-acetyl-L-glutamyl 5-phosphate + NADPH + H(+). It functions in the pathway amino-acid biosynthesis; L-arginine biosynthesis; N(2)-acetyl-L-ornithine from L-glutamate: step 3/4. Functionally, catalyzes the NADPH-dependent reduction of N-acetyl-5-glutamyl phosphate to yield N-acetyl-L-glutamate 5-semialdehyde. The chain is N-acetyl-gamma-glutamyl-phosphate reductase from Tolumonas auensis (strain DSM 9187 / NBRC 110442 / TA 4).